The chain runs to 236 residues: Small ribosomal subunit protein uS2c (236 aa).

Belongs to the universal ribosomal protein uS2 family.

The protein localises to the plastid. It is found in the chloroplast. The polypeptide is Small ribosomal subunit protein uS2c (rps2) (Nymphaea alba (White water-lily)).